The sequence spans 461 residues: uncharacterized protein (461 aa).

Residues 86–127 form a disordered region; that stretch reads KMKPNKDDDEEEDEDDEDDEDDEEEDNEEEDNEEENEITIAP. Residues 92-122 are compositionally biased toward acidic residues; the sequence is DDDEEEDEDDEDDEDDEEEDNEEEDNEEENE. 2 coiled-coil regions span residues 95 to 123 and 405 to 459; these read EEED…ENEI and NKYI…KLKK.

The protein belongs to the mimivirus L5 family.

This is an uncharacterized protein from Acanthamoeba polyphaga mimivirus (APMV).